The primary structure comprises 984 residues: Serine/threonine-protein kinase N2 (984 aa).

Phosphoserine is present on S21. Positions 33-109 constitute an REM-1 1 domain; the sequence is KLDFSDTMVQ…LQELNAHIVV (77 aa). K77 carries the post-translational modification N6-acetyllysine. The residue at position 110 (S110) is a Phosphoserine. The disordered stretch occupies residues 114–133; sequence DITDCPRTPDTPNNDPRCST. Phosphothreonine occurs at positions 121 and 124. REM-1 domains lie at 121-203 and 204-284; these read TPDT…TNEL and AFDN…EVPK. The segment covering 123–133 has biased composition (polar residues); sequence DTPNNDPRCST. Phosphoserine is present on residues S302, S306, S360, and S362. The segment at 351–383 is disordered; sequence ATSVALPGWSPSETRSSFMSRTSKSKSGSSRNL. In terms of domain architecture, C2 spans 353–473; sequence SVALPGWSPS…LYLEPQGTLF (121 aa). Residues 364–381 are compositionally biased toward low complexity; sequence TRSSFMSRTSKSKSGSSR. Residues 382 to 463 are necessary to rescue apical junction formation; it reads NLLKTDDLSN…FLDNQRHGMC (82 aa). Phosphoserine is present on residues S535, S583, and S620. Residues 558–584 form a disordered region; sequence ASDSTVTKLDFDLEPEPPPAPPRASSL. T628 is modified (phosphothreonine). Residue S631 is modified to Phosphoserine. The Protein kinase domain maps to 657-916; that stretch reads FRCCAVLGRG…AEDVKKHPFF (260 aa). ATP-binding positions include 663–671 and K686; that span reads LGRGHFGKV. Catalysis depends on D782, which acts as the Proton acceptor. Residue T816 is modified to Phosphothreonine; by PDPK1. The necessary for the catalytic activity stretch occupies residues 917–977; that stretch reads RLIDWSALMD…EEEQEMFRDF (61 aa). Positions 917–984 constitute an AGC-kinase C-terminal domain; the sequence is RLIDWSALMD…RDFDYIADWC (68 aa). S952 carries the post-translational modification Phosphoserine. At T958 the chain carries Phosphothreonine. Residues 978–984 are negatively regulates the responsiveness of the catalytic activity by cardiolipin and is required for optimal activation by the GTP-bound RhoA; that stretch reads DYIADWC.

This sequence belongs to the protein kinase superfamily. AGC Ser/Thr protein kinase family. PKC subfamily. In terms of assembly, interacts (via the REM repeats) with RHOA (GTP-bound form preferentially) and interacts (via the REM repeats) with RAC1 (GTP-bound form preferentially); the interactions induce its autophosphorylation. Interacts with RHOC. Interacts with NCK1 and NCK2. Interacts with NCK1 (via SH3 domains). Interacts with CD44. Interacts (via C-terminal kinase domain) with PDPK1; the interaction stimulates PDPK1 kinase activity. Interacts with MAP3K2; the interaction activates PRK2 kinase activity in a MAP3K2-independent kinase activity. Interacts (via C-terminal domain) with AKT1; the interaction occurs with the C-terminal cleavage product of PRK2 in apoptotic cells. Interacts (via C-terminus) with PTPN13 (via PDZ 3 domain). Interacts with CDK10. (Microbial infection) Interacts with HCV NS5B (via N-terminal finger domain). Autophosphorylated. Phosphorylated during mitosis. Phosphorylated by CDK10. In terms of processing, activated by limited proteolysis with trypsin. Proteolytically cleaved by caspase-3 during the induction of apoptotic cell death. Ubiquitous. Expressed in numerous tumor cell lines, especially in bladder tumor cells.

The protein resides in the cytoplasm. It localises to the nucleus. It is found in the membrane. Its subcellular location is the cell projection. The protein localises to the lamellipodium. The protein resides in the cytoskeleton. It localises to the cleavage furrow. It is found in the midbody. Its subcellular location is the cell junction. The catalysed reaction is L-seryl-[protein] + ATP = O-phospho-L-seryl-[protein] + ADP + H(+). It catalyses the reaction L-threonyl-[protein] + ATP = O-phospho-L-threonyl-[protein] + ADP + H(+). With respect to regulation, kinase activity is activated upon binding to GTP-bound Rhoa/Rac1 GTPases. Activated by caspase-3 (CASP3) cleavage during apoptosis. Activated by lipids, particularly cardiolipin and to a lesser extent by other acidic phospholipids and unsaturated fatty acids. Two specific sites, Thr-816 (activation loop of the kinase domain) and Thr-958 (turn motif), need to be phosphorylated for its full activation. In terms of biological role, PKC-related serine/threonine-protein kinase and Rho/Rac effector protein that participates in specific signal transduction responses in the cell. Plays a role in the regulation of cell cycle progression, actin cytoskeleton assembly, cell migration, cell adhesion, tumor cell invasion and transcription activation signaling processes. Phosphorylates CTTN in hyaluronan-induced astrocytes and hence decreases CTTN ability to associate with filamentous actin. Phosphorylates HDAC5, therefore lead to impair HDAC5 import. Direct RhoA target required for the regulation of the maturation of primordial junctions into apical junction formation in bronchial epithelial cells. Required for G2/M phases of the cell cycle progression and abscission during cytokinesis in a ECT2-dependent manner. Stimulates FYN kinase activity that is required for establishment of skin cell-cell adhesion during keratinocytes differentiation. Regulates epithelial bladder cells speed and direction of movement during cell migration and tumor cell invasion. Inhibits Akt pro-survival-induced kinase activity. Mediates Rho protein-induced transcriptional activation via the c-fos serum response factor (SRF). Involved in the negative regulation of ciliogenesis. Functionally, (Microbial infection) Phosphorylates HCV NS5B leading to stimulation of HCV RNA replication. In Homo sapiens (Human), this protein is Serine/threonine-protein kinase N2 (PKN2).